The sequence spans 214 residues: Glutathione S-transferase F11 (214 aa).

The region spanning 2–82 (VVKVYGQIKA…YYATKYADQG (81 aa)) is the GST N-terminal domain. Glutathione-binding positions include 11-12 (AA), 40-41 (QK), 53-54 (QV), and 66-67 (ES). Residues 89–214 (TLEGRAIVDQ…WKKLMELAAY (126 aa)) form the GST C-terminal domain.

It belongs to the GST superfamily. Phi family.

It localises to the cytoplasm. The protein localises to the cytosol. It catalyses the reaction RX + glutathione = an S-substituted glutathione + a halide anion + H(+). May be involved in the conjugation of reduced glutathione to a wide number of exogenous and endogenous hydrophobic electrophiles and have a detoxification role against certain herbicides. This Arabidopsis thaliana (Mouse-ear cress) protein is Glutathione S-transferase F11.